Here is a 193-residue protein sequence, read N- to C-terminus: Ion-translocating oxidoreductase complex subunit A (193 aa).

The next 6 helical transmembrane spans lie at 5–25, 39–59, 62–82, 102–122, 134–154, and 171–191; these read LLLL…FLGL, MGMG…AWAV, FILV…LVIA, LLGI…VALL, AVYG…FAAI, and SIAL…SGLV.

It belongs to the NqrDE/RnfAE family. As to quaternary structure, the complex is composed of six subunits: RnfA, RnfB, RnfC, RnfD, RnfE and RnfG.

The protein localises to the cell inner membrane. In terms of biological role, part of a membrane-bound complex that couples electron transfer with translocation of ions across the membrane. The protein is Ion-translocating oxidoreductase complex subunit A of Edwardsiella ictaluri (strain 93-146).